A 92-amino-acid polypeptide reads, in one-letter code: UPF0728 protein C10orf53 homolog (92 aa).

Belongs to the UPF0728 family.

This chain is UPF0728 protein C10orf53 homolog, found in Danio rerio (Zebrafish).